A 505-amino-acid chain; its full sequence is Neuronal acetylcholine receptor subunit alpha-3 (505 aa).

The first 31 residues, 1-31 (MGSGPLSLPLALSPPRLLLLLLLSLLPVARA), serve as a signal peptide directing secretion. Topologically, residues 32 to 250 (SEAEHRLFER…PLFYTINLII (219 aa)) are extracellular. N-linked (GlcNAc...) asparagine glycans are attached at residues Asn55 and Asn172. 2 disulfide bridges follow: Cys159–Cys173 and Cys223–Cys224. A helical transmembrane segment spans residues 251–266 (PCLLISFLTVLVFYLP). Residues 267–268 (SD) lie on the Cytoplasmic side of the membrane. A helical transmembrane segment spans residues 269–285 (CGEKVTLCISVLLSLTV). At 286-307 (FLLVITETIPSTSLVIPLIGEY) the chain is on the extracellular side. The chain crosses the membrane as a helical span at residues 308–326 (LLFTMIFVTLSIVITVFVL). Topologically, residues 327-474 (NVHYRTPTTH…QDDWKYVAMV (148 aa)) are cytoplasmic. 2 positions are modified to phosphoserine: Ser413 and Ser416. A helical transmembrane segment spans residues 475-493 (IDRIFLWVFTLVCILGTAG). Over 494–505 (LFLQPLMAREDA) the chain is Extracellular.

It belongs to the ligand-gated ion channel (TC 1.A.9) family. Acetylcholine receptor (TC 1.A.9.1) subfamily. Alpha-3/CHRNA3 sub-subfamily. As to quaternary structure, neuronal AChR is composed of two different types of subunits: alpha and beta. CHRNA3/Alpha-3 subunit can be combined to CHRNA5/alpha-5, CHRNB2/beta-2 CHRNB3/beta-3 or CHRNB4/beta-4 to give rise to functional receptors. Forms stoichiometries such as (CHRNA3)2:(CHRNB4)3 or (CHRNA3:CHRNB4)2:CHRNB3. Part of a complex composed of STUB1/CHIP, VCP/p97, CHRNA3, and UBXN2A that modulates the ubiquitination and endoplasmic reticulum-associated degradation (ERAD) of CHRNA3. Within the complex UBXN2A acts as a scaffold protein required for the interaction of CHRNA3 with VCP/p97, this interaction also inhibits CHRNA3 ubiquitination by STUB1/CHIP and subsequently ERAD. Interacts with UBXN2A (via SEP domain), the interaction is required for the interaction of CHRNA3 in the STUB1:VCP:UBXN2A complex. Interacts with RIC3; which is required for proper folding and assembly. Interacts with LYPD6. Post-translationally, ubiquitinated; by STUB1/CHIP and thereafter degraded by the 26S proteosome complex.

The protein localises to the synaptic cell membrane. The protein resides in the cell membrane. Its subcellular location is the endoplasmic reticulum. It is found in the golgi apparatus. The catalysed reaction is Ca(2+)(in) = Ca(2+)(out). It catalyses the reaction K(+)(in) = K(+)(out). The enzyme catalyses Na(+)(in) = Na(+)(out). Activated by a myriad of ligands such as acetylcholine, cytisine, nicotine, choline and epibatidine. The heteropentamer CHRNA3:CHRNB2 activity is blocked by alpha-conotoxins ImI, ImII, PnIA, GID and MII. The heteropentamer CHRNA3:CHRNB4 activity is blocked by the alpha-conotoxin ImI and AuIB. Functionally, component of neuronal acetylcholine receptors (nAChRs) that function as pentameric, ligand-gated cation channels with high calcium permeability among other activities. nAChRs are excitatory neurotrasnmitter receptors formed by a collection of nAChR subunits known to mediate synaptic transmission in the nervous system and the neuromuscular junction. Each nAchR subunit confers differential attributes to channel properties, including activation, deactivation and desensitization kinetics, pH sensitivity, cation permeability, and binding to allosteric modulators. CHRNA3 forms heteropentameric neuronal acetylcholine receptors with CHRNB2 and CHRNB4, with CHRNA5, and CHRNB3 as accesory subunits. CHRNA3:CHRNB4 being predominant in neurons of the autonomic ganglia, it is known as ganglionic nicotinic receptor. CHRNA3:CHRNB4 or CHRNA3:CHRNA5:CHRNB4 play also an important role in the habenulo-interpeduncular tract, modulating the mesolimbic dopamine system and affecting reward circuits and addiction. Hypothalamic CHRNA3:CHRNB4 nAChR activation by nicotine leads to activation of POMC neurons and a decrease in food intake. Also expressed in the urothelium where it modulates reflex bladder activity by increasing intracellular calcium through extracellular influx and basal ATP release. The sequence is that of Neuronal acetylcholine receptor subunit alpha-3 from Homo sapiens (Human).